The primary structure comprises 119 residues: Beta-2-microglobulin (119 aa).

An N-terminal signal peptide occupies residues 1–21; it reads MGKAAAVVLVTLVALLGLAQA. The region spanning 25 to 113 is the Ig-like C1-type domain; it reads PKVQVYSRFP…HETLKEPQVY (89 aa). Cysteines 45 and 100 form a disulfide.

The protein belongs to the beta-2-microglobulin family. In terms of assembly, heterodimer of an alpha chain and a beta chain. Beta-2-microglobulin is the beta-chain of major histocompatibility complex class I molecules.

It localises to the secreted. In terms of biological role, component of the class I major histocompatibility complex (MHC). Involved in the presentation of peptide antigens to the immune system. This Gallus gallus (Chicken) protein is Beta-2-microglobulin (B2M).